A 348-amino-acid polypeptide reads, in one-letter code: Mitogen-activated protein kinase kinase 5 (348 aa).

Disordered stretches follow at residues 1-26 (MKPI…DLSL) and 35-54 (LAVP…PASS). At S6 the chain carries Phosphoserine; by ASK7. In terms of domain architecture, Protein kinase spans 70–325 (LERVNRIGSG…AQQLLQHPFI (256 aa)). Residues 76-84 (IGSGAGGTV) and K99 contribute to the ATP site. D187 functions as the Proton acceptor in the catalytic mechanism. At T215 the chain carries Phosphothreonine. A Phosphoserine; by ASK7 modification is found at S221. Phosphoserine is present on S221. T225 bears the Phosphothreonine; by ASK7 mark. The residue at position 313 (R313) is an ADP-ribosylarginine; by HopF2.

This sequence belongs to the protein kinase superfamily. STE Ser/Thr protein kinase family. MAP kinase kinase subfamily. Interacts with P.syringae type III effector HopF2. Interacts with BZR1. Interacts with MPK6 and MPK3. Interacts with RACK1A, RACK1B and RACK1C. Interacts with MAPKKK5 mainly in the cytosol. Binds to BASL. Interacts with MAPKKK20. Post-translationally, phosphorylation at Thr-215 and Ser-221 by MAP kinase kinase kinases positively regulates kinase activity. Phosphorylated by MAPKKK5 and MAPKKK20 in response to abscisic acid (ABA). In terms of processing, ADP-ribosylation at Arg-313 by P.syringae type III effector HopF2 reduces the ability of the protein to phosphorylate downstream MPK6. As to expression, expressed higher in stems and leaves than in flowers and roots.

It carries out the reaction L-seryl-[protein] + ATP = O-phospho-L-seryl-[protein] + ADP + H(+). The enzyme catalyses L-threonyl-[protein] + ATP = O-phospho-L-threonyl-[protein] + ADP + H(+). It catalyses the reaction L-tyrosyl-[protein] + ATP = O-phospho-L-tyrosyl-[protein] + ADP + H(+). With respect to regulation, activated through serine and threonine phosphorylation by MEKK1 and MAPKKK20 in response to abscisic acid (ABA). Inhibited through phosphorylation by GSK3/Shaggy-like kinase ASKs. Inhibited through ADP-Ribosylation by P.syringae HopF2. Activated after high light stress. Functionally, mitogen-activated protein kinase kinase (MAPKK) which regulates abscisic acid (ABA) responses in a MAPKKK20-MKK5-MPK6 cascade involved in root growth (e.g. root cell division and elongation) and stomatal response, probably via MAPK6 activation by protein phosphorylation. Involved in the second phase of hydrogen peroxide generation during hypersensitive response-like cell death. Involved in the innate immune MAP kinase signaling cascade (MEKK1, MKK4/MKK5 and MPK3/MPK6) downstream of bacterial flagellin receptor FLS2. Activates by phosphorylation the downstream MPK3 and MPK6. YDA-MKK4/MKK5-MPK3/MPK6 module regulates stomatal cell fate before the guard mother cell (GMC) is specified. This MAPK cascade also functions downstream of the ER receptor in regulating coordinated local cell proliferation, which shapes the morphology of plant organs. MKK4 and MKK5 participate in the regulation of floral organ abscission. Target of the Pseudomonas syringae type III effector HopF2, that inhibits the activation of the downstream MPK6 and PAMP-triggered immunity. Plays a critical role in high light stress tolerance by the mediation of the Cu/Zn SODs CSD1 and CSD2 gene expression. Phosphorylates BZR1 in vitro. The chain is Mitogen-activated protein kinase kinase 5 from Arabidopsis thaliana (Mouse-ear cress).